A 471-amino-acid polypeptide reads, in one-letter code: Collagenase 3 (471 aa).

The N-terminal stretch at 1-19 is a signal peptide; that stretch reads MQPGVLAACLLLSWTHCWS. Positions 20 to 103 are cleaved as a propeptide — activation peptide; sequence LPLLNSNEDD…PRCGVPDVGE (84 aa). Positions 94–101 match the Cysteine switch motif; that stretch reads PRCGVPDV. Position 96 (Cys96) interacts with Zn(2+). The N-linked (GlcNAc...) asparagine glycan is linked to Asn117. Asp128 provides a ligand contact to Ca(2+). Residues Asn152 and Asn158 are each glycosylated (N-linked (GlcNAc...) asparagine). A Ca(2+)-binding site is contributed by Asp162. 2 residues coordinate Zn(2+): His172 and Asp174. The interaction with TIMP2 stretch occupies residues 176-246; it reads YPFDGPSGLL…GALMFPIYTY (71 aa). Asp179, Gly180, Ser182, and Leu184 together coordinate Ca(2+). His187 serves as a coordination point for Zn(2+). Ca(2+)-binding residues include Asn194, Gly196, and Asp198. His200 contributes to the Zn(2+) binding site. Positions 202, 203, and 205 each coordinate Ca(2+). His222 is a Zn(2+) binding site. Residue Glu223 is part of the active site. Zn(2+)-binding residues include His226, His232, and Met240. Positions 263-284 are disordered; that stretch reads QSLYGPGDEDPNPKHPKTPDKC. The tract at residues 268–471 is interaction with collagen; that stretch reads PGDEDPNPKH…VMPTNSLLWC (204 aa). Basic and acidic residues predominate over residues 273–284; that stretch reads PNPKHPKTPDKC. Hemopexin repeat units lie at residues 281-330, 331-377, 379-427, and 428-471; these read PDKC…WPEL, PNRI…GFPR, VKKI…FPGI, and GGKV…LLWC. The cysteines at positions 284 and 471 are disulfide-linked. Residues Asp291, Ile293, Asp335, and Ala337 each contribute to the Ca(2+) site. Tyr366 carries the phosphotyrosine; by PKDCC modification. Ca(2+) contacts are provided by Ser383 and Ala385. The N-linked (GlcNAc...) asparagine glycan is linked to Asn409. Residues Asp432 and Val434 each contribute to the Ca(2+) site.

Belongs to the peptidase M10A family. Requires Ca(2+) as cofactor. The cofactor is Zn(2+). The proenzyme is activated by removal of the propeptide; this cleavage can be effected by other matrix metalloproteinases, such as MMP2, MMP3 and MMP14 and may involve several cleavage steps. Cleavage can also be autocatalytic, after partial maturation by another protease or after treatment with 4-aminophenylmercuric acetate (APMA) (in vitro). In terms of processing, N-glycosylated. Post-translationally, tyrosine phosphorylated by PKDCC/VLK.

It is found in the secreted. The protein resides in the extracellular space. The protein localises to the extracellular matrix. Functionally, plays a role in the degradation of extracellular matrix proteins including fibrillar collagen, fibronectin, TNC and ACAN. Cleaves triple helical collagens, including type I, type II and type III collagen, but has the highest activity with soluble type II collagen. Can also degrade collagen type IV, type XIV and type X. May also function by activating or degrading key regulatory proteins, such as TGFB1 and CCN2. Plays a role in wound healing, tissue remodeling, cartilage degradation, bone development, bone mineralization and ossification. Required for normal embryonic bone development and ossification. Plays a role in the healing of bone fractures via endochondral ossification. Plays a role in wound healing, probably by a mechanism that involves proteolytic activation of TGFB1 and degradation of CCN2. Plays a role in keratinocyte migration during wound healing. May play a role in cell migration and in tumor cell invasion. In Oryctolagus cuniculus (Rabbit), this protein is Collagenase 3 (MMP13).